A 453-amino-acid chain; its full sequence is Chromosomal replication initiator protein DnaA (453 aa).

The tract at residues 1–74 (MKEKQFWNRI…GFEIYDAEIT (74 aa)) is domain I, interacts with DnaA modulators. Residues 74 to 113 (TPHYIFTKPQDTTSSQVEEATNLTLYDYSPKLVSIPYSDT) are domain II. Residues 114-331 (GLKEKYTFDN…GAINDITLIA (218 aa)) form a domain III, AAA+ region region. Residues Gly158, Gly160, Lys161, and Thr162 each contribute to the ATP site. The interval 332–453 (RVKKIKDITI…EIESIKKKIK (122 aa)) is domain IV, binds dsDNA.

This sequence belongs to the DnaA family. In terms of assembly, oligomerizes as a right-handed, spiral filament on DNA at oriC. Interacts (via domains I and III) with CcrZ.

The protein resides in the cytoplasm. Its activity is regulated as follows. CcrZ stimulates DnaA, possibly by phosphorylation of an intermediate molecule, to initiate DNA replication. Plays an essential role in the initiation and regulation of chromosomal replication. ATP-DnaA binds to the origin of replication (oriC) to initiate formation of the DNA replication initiation complex once per cell cycle. Binds the DnaA box (a 9 base pair repeat at the origin) and separates the double-stranded (ds)DNA. Forms a right-handed helical filament on oriC DNA; dsDNA binds to the exterior of the filament while single-stranded (ss)DNA is stabiized in the filament's interior. The ATP-DnaA-oriC complex binds and stabilizes one strand of the AT-rich DNA unwinding element (DUE), permitting loading of DNA polymerase. After initiation quickly degrades to an ADP-DnaA complex that is not apt for DNA replication. Binds acidic phospholipids. In terms of biological role, mutations in this gene suppress a deletion of cell cycle regulator ccrZ. This Streptococcus pneumoniae serotype 2 (strain D39 / NCTC 7466) protein is Chromosomal replication initiator protein DnaA.